Reading from the N-terminus, the 644-residue chain is Beta-mannosyltransferase 2 (644 aa).

Over Met-1–Asn-6 the chain is Cytoplasmic. Residues Phe-7–Trp-27 form a helical membrane-spanning segment. At Asn-28–Gln-644 the chain is on the extracellular side. A glycan (N-linked (GlcNAc...) asparagine) is linked at Asn-484. Positions Thr-512–Gln-644 form a coiled coil. A disordered region spans residues Glu-517 to Gln-644.

It belongs to the BMT family.

It localises to the membrane. In terms of biological role, beta-mannosyltransferase involved in cell wall biosynthesis. Initiates the beta-mannosylation of core N-linked glycans. This is Beta-mannosyltransferase 2 (BMT2) from Komagataella phaffii (strain GS115 / ATCC 20864) (Yeast).